The primary structure comprises 1013 residues: Poly [ADP-ribose] polymerase 1 (1013 aa).

A2 is modified (N-acetylalanine). The PARP-type 1 zinc finger occupies 9 to 93 (YRVQYAKSGR…KVKKTAEAGG (85 aa)). C21 and C24 together coordinate Zn(2+). S41 carries the post-translational modification Phosphoserine. Zn(2+) contacts are provided by H53 and C56. Residues K97 and K105 each carry the N6-acetyllysine modification. Residues 113–203 (FAAEYAKSNR…ALKKQLPAIK (91 aa)) form a PARP-type 2 zinc finger. Zn(2+) contacts are provided by C125 and C128. K131 is modified (N6-acetyllysine). Zn(2+)-binding residues include H159 and C162. A phosphoserine mark is found at S177, S179, and S185. Residue K192 forms a Glycyl lysine isopeptide (Lys-Gly) (interchain with G-Cter in SUMO2) linkage. Residues 200–226 (PAIKNEGKRKGDEVDGTDEVAKKKSRK) form a disordered region. K203 is covalently cross-linked (Glycyl lysine isopeptide (Lys-Gly) (interchain with G-Cter in SUMO1); alternate). A Glycyl lysine isopeptide (Lys-Gly) (interchain with G-Cter in SUMO2); alternate cross-link involves residue K203. Basic and acidic residues predominate over residues 204-226 (NEGKRKGDEVDGTDEVAKKKSRK). Short sequence motifs (nuclear localization signal) lie at residues 207 to 209 (KRK) and 221 to 226 (KKKSRK). In terms of domain architecture, PADR1 zinc-binding spans 225–359 (RKETDKYSKL…VKKQDRIFPP (135 aa)). K249 is covalently cross-linked (Glycyl lysine isopeptide (Lys-Gly) (interchain with G-Cter in SUMO2)). Phosphoserine occurs at positions 274 and 277. Residues 290–332 (GALLPCKECSGQLVFKSDAYYCTGDVTAWTKCMVKTQNPSRKE) form a zinc ribbon region. Residues C295, C298, C311, and C321 each coordinate Zn(2+). Positions 373–523 (VTSAPTAVNS…GVNKSEKRMK (151 aa)) are automodification domain. In terms of domain architecture, BRCT spans 385-476 (PADKPLSNMK…KSLQDLLSAH (92 aa)). PolyADP-ribosyl aspartic acid is present on D387. E407, E413, E435, E437, E444, E445, E448, and E456 each carry polyADP-ribosyl glutamic acid. A Glycyl lysine isopeptide (Lys-Gly) (interchain with G-Cter in SUMO2) cross-link involves residue K467. E484 is modified (polyADP-ribosyl glutamic acid). K486 is covalently cross-linked (Glycyl lysine isopeptide (Lys-Gly) (interchain with G-Cter in SUMO1); alternate). Residue K486 forms a Glycyl lysine isopeptide (Lys-Gly) (interchain with G-Cter in SUMO2); alternate linkage. 2 positions are modified to polyADP-ribosyl glutamic acid: E488 and E491. A disordered region spans residues 489–508 (PGEVVAPRGKSAAPSKKSKG). The span at 494–503 (APRGKSAAPS) shows a compositional bias: low complexity. ADP-ribosylserine occurs at positions 499, 503, and 506. K511 participates in a covalent cross-link: Glycyl lysine isopeptide (Lys-Gly) (interchain with G-Cter in SUMO2). PolyADP-ribosyl glutamic acid occurs at positions 512 and 513. ADP-ribosylserine is present on S518. E519 bears the PolyADP-ribosyl glutamic acid mark. K520 is modified (N6-(ADP-ribosyl)lysine). K527 is covalently cross-linked (Glycyl lysine isopeptide (Lys-Gly) (interchain with G-Cter in SUMO2)). One can recognise a WGR domain in the interval 541-637 (SAHVLEKGGK…KNFTKYPKKF (97 aa)). T593 carries the phosphothreonine modification. 2 positions are modified to N6-acetyllysine: K599 and K620. The 118-residue stretch at 661-778 (KSKLPKPVQE…DIEVAYSLLR (118 aa)) folds into the PARP alpha-helical domain. A Glycyl lysine isopeptide (Lys-Gly) (interchain with G-Cter in SUMO1); alternate cross-link involves residue K747. K747 participates in a covalent cross-link: Glycyl lysine isopeptide (Lys-Gly) (interchain with G-Cter in SUMO2); alternate. 2 positions are modified to phosphoserine: S781 and S785. In terms of domain architecture, PARP catalytic spans 787–1013 (DPIDVNYEKL…LKFNFKTSLW (227 aa)). NAD(+) is bound by residues 861–863 (HGS), G870, R877, and S903. E987 serves as the catalytic For poly [ADP-ribose] polymerase activity.

It belongs to the ARTD/PARP family. In terms of assembly, homodimer; PARP-type zinc-fingers from separate PARP1 molecules form a dimer module that specifically recognizes DNA strand breaks. Heterodimer; heterodimerizes with PARP2. Interacts (via the PARP catalytic domain) with HPF1. Interacts with NMNAT1. Interacts with nucleosomes; with a preference for nucleosomes containing H2A.X. Interacts with APTX. Component of a base excision repair (BER) complex, containing at least XRCC1, PARP1, PARP2, POLB and LRIG3. Interacts with SRY. The SWAP complex consists of NPM1, NCL, PARP1 and SWAP70. Interacts with TIAM2. Interacts with PARP3; leading to activate PARP1 in absence of DNA. Interacts (when poly-ADP-ribosylated) with CHD1L (via macro domain). Interacts with the DNA polymerase alpha catalytic subunit POLA1; this interaction functions as part of the control of replication fork progression. Interacts with EEF1A1 and TXK. Interacts with RNF4. Interacts with RNF146. Interacts with ZNF423. Interacts with APLF. Interacts with SNAI1 (via zinc fingers); the interaction requires SNAI1 to be poly-ADP-ribosylated and non-phosphorylated (active) by GSK3B. Interacts (when poly-ADP-ribosylated) with PARP9. Interacts with NR4A3; activates PARP1 by improving acetylation of PARP1 and suppressing the interaction between PARP1 and SIRT1. Interacts (via catalytic domain) with PUM3; the interaction inhibits the poly-ADP-ribosylation activity of PARP1 and the degradation of PARP1 by CASP3 following genotoxic stress. Interacts with ZNF365. Interacts with RRP1B. Interacts with TIMELESS; the interaction is direct. Interacts with CGAS; leading to impede the formation of the PARP1-TIMELESS complex. Interacts with KHDC3L, the interaction is increased following the formation of DNA double-strand breaks. Interacts (when auto-poly-ADP-ribosylated) with XRCC1; leading to inhibit PARP1 ADP-ribosyltransferase activity. Interacts with SPINDOC; promoting PARP1 ADP-ribosyltransferase activity. Interacts with BANF1; leading to inhibit PARP1 ADP-ribosyltransferase activity in response to oxidative DNA damage. Interacts (when sumoylated and ubiquitinated) with VCP/p97; leading to its extraction from chromatin. Interacts with YARS1; promoting PARP1 ADP-ribosyltransferase activity. Interacts with PACMP micropeptide; Interacts with PACMP micropeptide; interaction. Interacts (when poly-ADP-ribosylated) with isoform 1 of MACROH2A1; MACROH2A1 specifically binds to poly-ADP-ribose chains and inhibits PARP1 activity, limiting the consumption of nuclear NAD(+). Interacts with CARM1; promoting recruitment to replication forks. Interacts with RECQL. Interacts with ZNF32; the interaction reshapes ZNF432 interacting proteins. Interacts with TPRN; TPRN interacts with a number of DNA damage response proteins, is recruited to sites of DNA damage and may play a role in DNA damage repair. As to quaternary structure, interacts (when auto-poly-ADP-ribosylated) with AIFM1. Poly-ADP-ribosylated on serine, glutamate and aspartate residues by autocatalysis. Auto-ADP-ribosylation on serine takes place following interaction with HPF1. Auto poly-ADP-ribosylation on serine residues promotes its dissociation from chromatin. Poly-ADP-ribosylated by PARP2; poly-ADP-ribosylation mediates the recruitment of CHD1L to DNA damage sites. Mono-ADP-ribosylated at Lys-520 by SIRT6 in response to oxidative stress, promoting recruitment to double-strand breaks (DSBs) sites. In terms of processing, S-nitrosylated, leading to inhibit transcription regulation activity. Post-translationally, phosphorylated at Thr-593 by PRKDC in response to DNA damage following virus infection, promoting its translocation to the cytosol. Phosphorylated by TXK. Proteolytically cleaved by caspase-3 (CASP3) and caspase-7 (CASP7) in response to apoptosis to generate the Poly [ADP-ribose] polymerase 1, processed N-terminus and Poly [ADP-ribose] polymerase 1, processed C-terminus forms. In terms of processing, sumoylated with SUMO1 or SUMO2 by PIAS4 following prolonged residence (trapping) to chromatin. Sumoylation promotes ubiquitination by RNF4 and removal from chromatin by VCP/p97. Post-translationally, ubiquitinated by RNF4 following sumoylation by PIAS4 in response to prolonged residence (trapping) to chromatin. Ubiquitination promotes removal from chromatin by VCP/p97. In terms of tissue distribution, widely expressed. Expression is correlated with proliferation, with higher levels occurring during early fetal development and organogenesis and in the highly proliferative cell compartments of adult. Expressed in B-cells that have been induced to switch to various Ig isotypes.

The protein localises to the chromosome. The protein resides in the nucleus. Its subcellular location is the nucleolus. It is found in the cytoplasm. It localises to the cytosol. It carries out the reaction NAD(+) + (ADP-D-ribosyl)n-acceptor = nicotinamide + (ADP-D-ribosyl)n+1-acceptor + H(+).. The catalysed reaction is L-seryl-[protein] + NAD(+) = O-(ADP-D-ribosyl)-L-seryl-[protein] + nicotinamide + H(+). The enzyme catalyses L-aspartyl-[protein] + NAD(+) = 4-O-(ADP-D-ribosyl)-L-aspartyl-[protein] + nicotinamide. It catalyses the reaction L-glutamyl-[protein] + NAD(+) = 5-O-(ADP-D-ribosyl)-L-glutamyl-[protein] + nicotinamide. It carries out the reaction L-tyrosyl-[protein] + NAD(+) = O-(ADP-D-ribosyl)-L-tyrosyl-[protein] + nicotinamide + H(+). The catalysed reaction is L-histidyl-[protein] + NAD(+) = N(tele)-(ADP-D-ribosyl)-L-histidyl-[protein] + nicotinamide + H(+). With respect to regulation, ADP-ribosyltransferase activity is regulated via an allosteric activation mechanism. In absence of activation signal, PARP1 is autoinhibited by the PARP alpha-helical domain (also named HD region), which prevents effective NAD(+)-binding. Activity is highly stimulated by signals, such as DNA strand breaks. Binding to damaged DNA unfolds the PARP alpha-helical domain, relieving autoinhibition. Poly-ADP-ribosyltransferase activity is tightly regulated and PARP1 is removed from damaged chromatin following initial poly-ADP-ribosylation of chromatin to avoid prolonged residence (trapping) that has cytotoxic consequences. A number of factors (VCP/p97) or post-translational modifications (auto-poly-ADP-ribosylation or ubiquitination) promote PARP1 removal from chromatin. Functionally, poly-ADP-ribosyltransferase that mediates poly-ADP-ribosylation of proteins and plays a key role in DNA repair. Mediates glutamate, aspartate, serine, histidine or tyrosine ADP-ribosylation of proteins: the ADP-D-ribosyl group of NAD(+) is transferred to the acceptor carboxyl group of target residues and further ADP-ribosyl groups are transferred to the 2'-position of the terminal adenosine moiety, building up a polymer with an average chain length of 20-30 units. Serine ADP-ribosylation of proteins constitutes the primary form of ADP-ribosylation of proteins in response to DNA damage. Specificity for the different amino acids is conferred by interacting factors, such as HPF1 and NMNAT1. Following interaction with HPF1, catalyzes serine ADP-ribosylation of target proteins; HPF1 confers serine specificity by completing the PARP1 active site. Also catalyzes tyrosine ADP-ribosylation of target proteins following interaction with HPF1. Following interaction with NMNAT1, catalyzes glutamate and aspartate ADP-ribosylation of target proteins; NMNAT1 confers glutamate and aspartate specificity. PARP1 initiates the repair of DNA breaks: recognizes and binds DNA breaks within chromatin and recruits HPF1, licensing serine ADP-ribosylation of target proteins, such as histones (H2BS6ADPr and H3S10ADPr), thereby promoting decompaction of chromatin and the recruitment of repair factors leading to the reparation of DNA strand breaks. HPF1 initiates serine ADP-ribosylation but restricts the polymerase activity of PARP1 in order to limit the length of poly-ADP-ribose chains. In addition to base excision repair (BER) pathway, also involved in double-strand breaks (DSBs) repair: together with TIMELESS, accumulates at DNA damage sites and promotes homologous recombination repair by mediating poly-ADP-ribosylation. Mediates the poly-ADP-ribosylation of a number of proteins, including itself, APLF, CHFR and NFAT5. In addition to proteins, also able to ADP-ribosylate DNA: catalyzes ADP-ribosylation of DNA strand break termini containing terminal phosphates and a 2'-OH group in single- and double-stranded DNA, respectively. Required for PARP9 and DTX3L recruitment to DNA damage sites. PARP1-dependent PARP9-DTX3L-mediated ubiquitination promotes the rapid and specific recruitment of 53BP1/TP53BP1, UIMC1/RAP80, and BRCA1 to DNA damage sites. PARP1-mediated DNA repair in neurons plays a role in sleep: senses DNA damage in neurons and promotes sleep, facilitating efficient DNA repair. In addition to DNA repair, also involved in other processes, such as transcription regulation, programmed cell death, membrane repair, adipogenesis and innate immunity. Acts as a repressor of transcription: binds to nucleosomes and modulates chromatin structure in a manner similar to histone H1, thereby altering RNA polymerase II. Acts both as a positive and negative regulator of transcription elongation, depending on the context. Acts as a positive regulator of transcription elongation by mediating poly-ADP-ribosylation of NELFE, preventing RNA-binding activity of NELFE and relieving transcription pausing. Acts as a negative regulator of transcription elongation in response to DNA damage by catalyzing poly-ADP-ribosylation of CCNT1, disrupting the phase separation activity of CCNT1 and subsequent activation of CDK9. Involved in replication fork progression following interaction with CARM1: mediates poly-ADP-ribosylation at replication forks, slowing fork progression. Poly-ADP-ribose chains generated by PARP1 also play a role in poly-ADP-ribose-dependent cell death, a process named parthanatos. Also acts as a negative regulator of the cGAS-STING pathway. Acts by mediating poly-ADP-ribosylation of CGAS: PARP1 translocates into the cytosol following phosphorylation by PRKDC and catalyzes poly-ADP-ribosylation and inactivation of CGAS. Acts as a negative regulator of adipogenesis: catalyzes poly-ADP-ribosylation of histone H2B on 'Glu-35' (H2BE35ADPr) following interaction with NMNAT1, inhibiting phosphorylation of H2B at 'Ser-36' (H2BS36ph), thereby blocking expression of pro-adipogenetic genes. Involved in the synthesis of ATP in the nucleus, together with NMNAT1, PARG and NUDT5. Nuclear ATP generation is required for extensive chromatin remodeling events that are energy-consuming. In terms of biological role, promotes AIFM1-mediated apoptosis. This form, which translocates into the cytoplasm following cleavage by caspase-3 (CASP3) and caspase-7 (CASP7) in response to apoptosis, is auto-poly-ADP-ribosylated and serves as a poly-ADP-ribose carrier to induce AIFM1-mediated apoptosis. This cleavage form irreversibly binds to DNA breaks and interferes with DNA repair, promoting DNA damage-induced apoptosis. This is Poly [ADP-ribose] polymerase 1 (Parp1) from Mus musculus (Mouse).